The primary structure comprises 171 residues: Ribosome-binding factor A (171 aa).

Positions 126-138 (VREGAKHAGDADP) are enriched in basic and acidic residues. The disordered stretch occupies residues 126–171 (VREGAKHAGDADPYRVSGVEEEAGGSGEVQAEFDAEDTGDRNRQDD).

Belongs to the RbfA family. Monomer. Binds 30S ribosomal subunits, but not 50S ribosomal subunits or 70S ribosomes.

The protein localises to the cytoplasm. One of several proteins that assist in the late maturation steps of the functional core of the 30S ribosomal subunit. Associates with free 30S ribosomal subunits (but not with 30S subunits that are part of 70S ribosomes or polysomes). Required for efficient processing of 16S rRNA. May interact with the 5'-terminal helix region of 16S rRNA. In Mycobacterium sp. (strain JLS), this protein is Ribosome-binding factor A.